Reading from the N-terminus, the 492-residue chain is Transmembrane protein 39B (492 aa).

Residues 1–53 form a disordered region; it reads MGGRRGPNRTSYYRNPLCEPGSSGASGGGHSSSASVSSVRSRSRTTSGTGLSS. N-linked (GlcNAc...) asparagine glycosylation occurs at Asn8. Residues 31–53 are compositionally biased toward low complexity; the sequence is SSSASVSSVRSRSRTTSGTGLSS. Transmembrane regions (helical) follow at residues 77-97, 115-135, 153-175, 185-205, 288-308, 322-342, 421-441, and 447-467; these read SILF…VHYI, TSLN…IVLG, SLFR…GWSL, TYSF…IPFL, EVLV…VWFV, LFLL…LPAS, ILNI…YSLM, and HQTI…FKLL.

It belongs to the TMEM39 family.

The protein localises to the endoplasmic reticulum membrane. In terms of biological role, may protect the cells against DNA damage caused by exposure to the cold-warming stress and facilitates tissue damage repair during the recovery phase. In Rattus norvegicus (Rat), this protein is Transmembrane protein 39B.